The following is a 1447-amino-acid chain: Baculoviral IAP repeat-containing protein 1b (1447 aa).

3 BIR repeats span residues 60-127 (EAKR…CEFL), 159-227 (EEAR…CEFL), and 278-345 (EELR…CVFL). Zn(2+)-binding residues include Cys315, Cys318, His335, and Cys342. The 295-residue stretch at 508–802 (SVMCVEGEAG…EFLAAVRLTE (295 aa)) folds into the NACHT domain. Lys520 is a binding site for ATP.

In terms of assembly, component of the NLRC4 inflammasome, at least composed of NLRC4, caspase-1 (CASP1) and some NAIP protein. Interacts with S.typhimurium (Salmonella) PrgJ and B.thailandensis BsaK.

Sensor component of the NLRC4 inflammasome that specifically recognizes and binds type III secretion system (T3SS) rod proteins such as S.typhimurium (Salmonella) PrgJ and B.thailandensis BsaK from pathogenic bacteria. Association of pathogenic bacteria proteins drives in turn drive assembly and activation of the NLRC4 inflammasome, promoting caspase-1 activation, cytokine production and macrophage pyroptosis. The NLRC4 inflammasome is activated as part of the innate immune response to a range of intracellular bacteria. The NLRC4 inflammasome senses Gram-negative bacteria such as L.pneumophila and P.aeruginosa, enteric pathogens S.typhimurium (Salmonella) and S.flexneri. Prevents motor-neuron apoptosis induced by a variety of signals. This is Baculoviral IAP repeat-containing protein 1b (Naip2) from Mus musculus (Mouse).